The primary structure comprises 647 residues: A-type voltage-gated potassium channel KCND1 (647 aa).

The Cytoplasmic segment spans residues 1-183; sequence MAAGVATWLP…RAFENPHTST (183 aa). An interaction with KCNIP1, KCNIP2, and other family members region spans residues 2–20; the sequence is AAGVATWLPFARAAAVGWL. Positions 104, 131, and 132 each coordinate Zn(2+). Residues 144 to 164 form a disordered region; sequence AQRLAEDEEAEQTGDGPALPA. Residues 184 to 205 traverse the membrane as a helical segment; it reads AALVFYYVTGFFIAVSVIANVV. Topologically, residues 206–230 are extracellular; that stretch reads ETIPCRGPARRPPREQPCGDRFPLA. Residues 231–252 traverse the membrane as a helical segment; that stretch reads FFCMDTACVLIFTGEYLLRLFA. At 253-263 the chain is on the cytoplasmic side; it reads APSRCRFLRSV. The helical transmembrane segment at 264-284 threads the bilayer; that stretch reads MSLIDVVAILPYYIGLLVPKN. The Extracellular portion of the chain corresponds to 285–287; sequence EDV. Residues 288–308 traverse the membrane as a helical; Voltage-sensor segment; it reads SGAFVTLRVFRVFRIFKFSRH. The Cytoplasmic segment spans residues 309–323; that stretch reads SQGLRILGYTLKSCA. An S4-S5 linker region spans residues 310–323; sequence QGLRILGYTLKSCA. The chain crosses the membrane as a helical span at residues 324 to 345; that stretch reads SELGFLLFSLTMAIIIFATVMF. The Extracellular segment spans residues 346–359; sequence YAEKGTSKTNFTSI. Positions 360–371 form an intramembrane region, helical; the sequence is PAAFWYTIVTMT. The short motif at 372–377 is the Selectivity filter element; sequence TLGYGD. Residues 372–379 lie within the membrane without spanning it; that stretch reads TLGYGDMV. Residues 380-386 are Extracellular-facing; sequence PSTIAGK. The chain crosses the membrane as a helical span at residues 387 to 415; that stretch reads IFGSICSLSGVLVIALPVPVIVSNFSRIY. At 416 to 647 the chain is on the cytoplasmic side; that stretch reads HQNQRADKRR…LPETVKISSL (232 aa). A required for dendritic targeting region spans residues 474–489; the sequence is FEQQHHHLLHCLEKTT. Residues 510–520 are compositionally biased toward low complexity; sequence GRTSRSTSVSS. Residues 510–531 form a disordered region; it reads GRTSRSTSVSSQPVGPSSLLSS. Residues 521–530 are compositionally biased toward polar residues; sequence QPVGPSSLLS. Serine 555 is modified (phosphoserine). Disordered regions lie at residues 564–584 and 601–634; these read GLRRSPGPQSRSSLNAKPHDS and IPTPPANTPDESQPSSPGGGGRASSTLRNSRLGT.

Belongs to the potassium channel family. D (Shal) (TC 1.A.1.2) subfamily. Kv4.1/KCND1 sub-subfamily. In terms of assembly, component of heteromultimeric potassium channels. Identified in potassium channel complexes containing KCND1, KCND2, KCND3, KCNIP1, KCNIP2, KCNIP3, KCNIP4, DPP6 and DPP10. In terms of tissue distribution, detected in carotid body chemoreceptor cells and in frontal cortex.

It localises to the cell membrane. The catalysed reaction is K(+)(in) = K(+)(out). Functionally, A-type voltage-gated potassium channel that mediates transmembrane potassium transport in excitable membranes in the brain. Mediates A-type current I(SA) in suprachiasmatic nucleus (SCN) neurons. Exhibits a low-threshold A-type current with a hyperpolarized steady-state inactivation midpoint and the recovery process was steeply voltage-dependent, with recovery being markedly faster at more negative potentials. May regulates repetitive firing rates in the suprachiasmatic nucleus (SCN) neurons and circadian rhythms in neuronal excitability and behavior. Contributes to the regulation of the circadian rhythm of action potential firing in suprachiasmatic nucleus neurons, which regulates the circadian rhythm of locomotor activity. The regulatory subunit KCNIP1 modulates the kinetics of channel inactivation, increases the current amplitudes and accelerates recovery from inactivation, shifts activation in a depolarizing direction. The regulatory subunit DPP10 decreases the voltage sensitivity of the inactivation channel gating. The sequence is that of A-type voltage-gated potassium channel KCND1 from Oryctolagus cuniculus (Rabbit).